A 395-amino-acid chain; its full sequence is Immediate-early protein ICP-46 (395 aa).

This sequence belongs to the IIV-6 393L family.

The chain is Immediate-early protein ICP-46 (ICR489) from Dryophytes versicolor (chameleon treefrog).